A 744-amino-acid polypeptide reads, in one-letter code: Leukocyte immunoglobulin-like receptor subfamily B member 3A (744 aa).

The N-terminal stretch at 1-24 (MTFTFTALLCLGLTLGLWIPVLTG) is a signal peptide. Residues 25–543 (SLPKPILRVQ…PPDGLQRYLK (519 aa)) are Extracellular-facing. Ig-like C2-type domains follow at residues 26–119 (LPKP…VVTG), 121–221 (YSKP…LVSG), 223–316 (LQKP…VVTG), 320–419 (YHPL…LITG), and 426–520 (FLSV…IVSG). 3 disulfide bridges follow: C49–C98, C144–C197, and C246–C295. An N-linked (GlcNAc...) asparagine glycan is attached at N79. The N-linked (GlcNAc...) asparagine glycan is linked to N338. A disulfide bridge connects residues C343 and C395. N-linked (GlcNAc...) asparagine glycosylation is present at N440. C445 and C496 form a disulfide bridge. A helical transmembrane segment spans residues 544–564 (ALIGVSVAFLLFLFILIFILL). The Cytoplasmic portion of the chain corresponds to 565 to 744 (RRRHQEKFRK…PGAVPKNKKQ (180 aa)). Residues 572–584 (FRKDDEDAQKGKE) show a composition bias toward basic and acidic residues. 3 disordered regions span residues 572 to 617 (FRKD…ESLY), 630 to 652 (ELDTWKPPEGDPQGETYAQVEPS), and 667 to 744 (EQLN…NKKQ). The ITIM motif 1 signature appears at 615–620 (SLYASV). 2 consecutive short sequence motifs (ITIM motif) follow at residues 695-700 (VTYAQL) and 725-730 (SVYAAL). Residues Y697 and Y727 each carry the phosphotyrosine; by LYN modification.

In terms of assembly, interacts with LYN, PTPN6/SHP-1 and PTPN11/SHP-2. In terms of processing, phosphorylated on tyrosine residues by LYN. Phosphorylation at Tyr-697 and Tyr-727 is important for interaction with PTPN6/SHP-1 and PTPN11/SHP-2.

The protein localises to the cell membrane. Its function is as follows. May act as receptor for class I MHC antigens. Becomes activated upon coligation with immune receptors, such as FCGR2B and the B-cell receptor. Down-regulates antigen-induced B-cell activation by recruiting phosphatases to its immunoreceptor tyrosine-based inhibitor motifs (ITIM). The protein is Leukocyte immunoglobulin-like receptor subfamily B member 3A of Rattus norvegicus (Rat).